The sequence spans 119 residues: Large ribosomal subunit protein bL20 (119 aa).

The protein belongs to the bacterial ribosomal protein bL20 family.

Binds directly to 23S ribosomal RNA and is necessary for the in vitro assembly process of the 50S ribosomal subunit. It is not involved in the protein synthesizing functions of that subunit. This Verminephrobacter eiseniae (strain EF01-2) protein is Large ribosomal subunit protein bL20.